Consider the following 597-residue polypeptide: 2-isopropylmalate synthase (597 aa).

A unknown region spans residues 1–80; it reads MQLDIDRLVA…QKNESLERTE (80 aa). Residues 87–349 form the Pyruvate carboxyltransferase domain; it reads VIIFDTTLRD…ETGIDTTQIV (263 aa). The interval 87-349 is 2-isopropylmalate synthase; it reads VIIFDTTLRD…ETGIDTTQIV (263 aa). Positions 96, 284, 286, and 320 each coordinate Mn(2+). Positions 475–597 are regulatory domain; the sequence is KFISQKISTE…KPKAQGSGTI (123 aa).

It belongs to the alpha-IPM synthase/homocitrate synthase family. LeuA type 1 subfamily. Homodimer. Mn(2+) serves as cofactor.

It is found in the cytoplasm. It catalyses the reaction 3-methyl-2-oxobutanoate + acetyl-CoA + H2O = (2S)-2-isopropylmalate + CoA + H(+). It functions in the pathway amino-acid biosynthesis; L-leucine biosynthesis; L-leucine from 3-methyl-2-oxobutanoate: step 1/4. Catalyzes the condensation of the acetyl group of acetyl-CoA with 3-methyl-2-oxobutanoate (2-ketoisovalerate) to form 3-carboxy-3-hydroxy-4-methylpentanoate (2-isopropylmalate). This is 2-isopropylmalate synthase from Neisseria gonorrhoeae (strain ATCC 700825 / FA 1090).